The chain runs to 502 residues: MEPVERKLEIGSRSYSKMPLTQQRSSGEPPRLKATPKDELHDLLCVGFGPASLAIAIALHDALDPCLNKTPNSNWQPKVCFLERQKQFAWHSGMLVPGSKMQISFIKDLATMRDPRSSFTFLNYLHQKDRLIHFTNLSTFLPARMEFEDYMRWCAQRFAHVVSYGEEVIEVIPGKTNPSSTLVDFFTVKSRNVETGEISARMARKVVVALGGTAKLPKELPQDPRIMHSSKYCTTLPAMLKDSREAYNIAVLGSGQSAAEIFHDLQKRYPNSKTTLIMRDTAMRPSDDSPFVNEVFNPERVDKFFSLSSAERQRSLTADKATNYSVVRLELIEQIFNDMYLQRVQNPDETQWQHRILPGRKITRVEHYGPHRRMRLHVRAVKDEKDSLVGNGKETLEVDALMVATGYNRNAHEQLLKNVQHLRPAGQENWTPNREYRVELDPSKVNAQAGIWLQGCNEQTHGLSDSLLSILASRSGEMVNSIFGGEFAGTTVPDTTHIRAML.

Residues 1–10 (MEPVERKLEI) show a composition bias toward basic and acidic residues. Positions 1 to 34 (MEPVERKLEIGSRSYSKMPLTQQRSSGEPPRLKA) are disordered. Over residues 13–26 (RSYSKMPLTQQRSS) the composition is skewed to polar residues. FAD-binding positions include 83–91 (ERQKQFAWH) and Gln102. Residue Lys107 coordinates substrate. Val168 lines the FAD pocket. Residues 254 to 257 (SGQS) and Arg279 contribute to the NADP(+) site. Substrate-binding positions include 293-296 (NEVF) and Asn323. Residue 323 to 325 (NYS) coordinates NADP(+). 466 to 468 (SLL) is an FAD binding site. Residue Ser469 coordinates substrate.

It belongs to the lysine N(6)-hydroxylase/L-ornithine N(5)-oxygenase family. In terms of assembly, homotetramer. FAD is required as a cofactor.

It catalyses the reaction L-ornithine + NADPH + O2 = N(5)-hydroxy-L-ornithine + NADP(+) + H2O. It carries out the reaction L-ornithine + NADH + O2 = N(5)-hydroxy-L-ornithine + NAD(+) + H2O. It participates in siderophore biosynthesis. In terms of biological role, catalyzes the conversion of L-ornithine to N(5)-hydroxyornithine, the first step in the biosynthesis of all hydroxamate-containing siderophores, such as deferriferrichrysin. This Aspergillus oryzae (strain ATCC 42149 / RIB 40) (Yellow koji mold) protein is L-ornithine N(5)-monooxygenase.